Consider the following 250-residue polypeptide: 2,3-bisphosphoglycerate-dependent phosphoglycerate mutase (250 aa).

Substrate-binding positions include 8-15 (RHGESQWN), 21-22 (TG), R60, 87-90 (ERHY), K98, 114-115 (RR), and 183-184 (GN). Catalysis depends on H9, which acts as the Tele-phosphohistidine intermediate. E87 serves as the catalytic Proton donor/acceptor.

It belongs to the phosphoglycerate mutase family. BPG-dependent PGAM subfamily. Homodimer.

It catalyses the reaction (2R)-2-phosphoglycerate = (2R)-3-phosphoglycerate. It functions in the pathway carbohydrate degradation; glycolysis; pyruvate from D-glyceraldehyde 3-phosphate: step 3/5. In terms of biological role, catalyzes the interconversion of 2-phosphoglycerate and 3-phosphoglycerate. This Bordetella parapertussis (strain 12822 / ATCC BAA-587 / NCTC 13253) protein is 2,3-bisphosphoglycerate-dependent phosphoglycerate mutase.